Consider the following 217-residue polypeptide: THAP domain-containing protein 2 (217 aa).

The segment at 1–80 (MPTNCAAAGC…LKMDAVPTIF (80 aa)) adopts a THAP-type zinc-finger fold. Positions 122–125 (EHSY) match the HCFC1-binding motif (HBM) motif.

The chain is THAP domain-containing protein 2 (Thap2) from Mus musculus (Mouse).